We begin with the raw amino-acid sequence, 397 residues long: Calponin-like protein clik-2 (397 aa).

6 Calponin-like repeats span residues Leu29–Ile54, Leu73–Val98, Ile119–Val144, Leu161–Thr189, Thr209–Leu234, and Val255–Gln280. The tract at residues Glu301–Glu397 is disordered. The span at Lys321–Glu332 shows a compositional bias: basic and acidic residues. Acidic residues-rich tracts occupy residues Val344–Ile360 and Glu367–Glu397.

The protein belongs to the calponin family. In terms of tissue distribution, expressed in pharyngeal muscle cells (at protein level).

Functionally, required for pharyngeal pumping. The protein is Calponin-like protein clik-2 of Caenorhabditis elegans.